Reading from the N-terminus, the 158-residue chain is MVEKVPMTQGGFVKLQEELRWRQQEERPRIIEAIAEARAHGDLSENAEYHAAKEAQSHNEGRITELEDLTARAEVIDLTKMSGDKIKFGAKVKLVDEDTEEEKTYQIVGDQEADVKAGRISISSPIARALIGKEVGDSIEVNAPGGSKAYEILQVSWG.

This sequence belongs to the GreA/GreB family.

In terms of biological role, necessary for efficient RNA polymerase transcription elongation past template-encoded arresting sites. The arresting sites in DNA have the property of trapping a certain fraction of elongating RNA polymerases that pass through, resulting in locked ternary complexes. Cleavage of the nascent transcript by cleavage factors such as GreA or GreB allows the resumption of elongation from the new 3'terminus. GreA releases sequences of 2 to 3 nucleotides. This is Transcription elongation factor GreA from Rhizobium etli (strain ATCC 51251 / DSM 11541 / JCM 21823 / NBRC 15573 / CFN 42).